The sequence spans 391 residues: Toluene efflux pump periplasmic linker protein TtgG (391 aa).

Positions 1 to 32 (MRAERWSQTVRQIRSPRALRVIPLTALMLISG) are cleaved as a signal peptide. The N-palmitoyl cysteine moiety is linked to residue Cys33. The S-diacylglycerol cysteine moiety is linked to residue Cys33. The stretch at 107–136 (RTYEAQLRRAEANRTSAQNLARRYETLLKT) forms a coiled coil.

This sequence belongs to the membrane fusion protein (MFP) (TC 8.A.1) family.

The protein localises to the cell inner membrane. Its function is as follows. The periplasmic linker component of an organic solvent efflux pump. Involved in export of a number of organic solvents, including toluene and styrene. This is the most important solvent efflux pump in this strain, although it can export AMP and some antibiotics. The polypeptide is Toluene efflux pump periplasmic linker protein TtgG (ttgG) (Pseudomonas putida (strain DOT-T1E)).